The following is a 473-amino-acid chain: MRYKFKTQEDLVNHLKSVGFVFANSEIYNGLANAWDYGPLGVLLKNNLKNLWWKEFVTKQKNIVGLDSAIILNPLVWKASGHLDNFSDPLIDCKSCKTRYRADKLIESFNKDIHIAENSTNEEFMKVLNDHKIFCPTCKQFNWTDIRHFNLMFKTHQGVIEDPKNIVYLRPETAQGIFVNFKNVQRSMRLHLPFGIAQIGKSFRNEITPGNFIFRTREFEQMEIEFFLKEEIAYDVFDKYLNQIQNWLVTCCGLDLNNLRKHEHPKEELSHYSKKTIDFEYNFLHGFSELYGIAYRTNYDLSVHMNLSKKDLTYFDEETKQKYIPHVIEPSVGVERLLYAILTEATFIEKLANDEDRILMNLKYDLAPYKIAVMPLVNKLKEKAEAVYNKILDLNISVTFDNSGSIGKRYRRQDAIGTIYCITIDYDSFGDEHDPTFTIRERNTMAQKRIKLSELSLYLSQKAHEDFQKQCQK.

Substrate is bound by residues arginine 101 and glutamate 172. Residues 204-206, 214-219, 289-290, and 333-336 contribute to the ATP site; these read RNE, FRTREF, EL, and GVER. 219–223 is a binding site for substrate; that stretch reads FEQME. 329–333 contributes to the substrate binding site; sequence EPSVG.

Belongs to the class-II aminoacyl-tRNA synthetase family. Homodimer.

It localises to the cytoplasm. The enzyme catalyses tRNA(Gly) + glycine + ATP = glycyl-tRNA(Gly) + AMP + diphosphate. Catalyzes the attachment of glycine to tRNA(Gly). The chain is Glycine--tRNA ligase from Ureaplasma parvum serovar 3 (strain ATCC 27815 / 27 / NCTC 11736).